The primary structure comprises 156 residues: Ribosomal RNA large subunit methyltransferase H (156 aa).

S-adenosyl-L-methionine is bound by residues Leu73, Gly104, and 123–128; that span reads LSALTL.

The protein belongs to the RNA methyltransferase RlmH family. In terms of assembly, homodimer.

Its subcellular location is the cytoplasm. It catalyses the reaction pseudouridine(1915) in 23S rRNA + S-adenosyl-L-methionine = N(3)-methylpseudouridine(1915) in 23S rRNA + S-adenosyl-L-homocysteine + H(+). Functionally, specifically methylates the pseudouridine at position 1915 (m3Psi1915) in 23S rRNA. The protein is Ribosomal RNA large subunit methyltransferase H of Shewanella frigidimarina (strain NCIMB 400).